The chain runs to 542 residues: Chaperonin GroEL 2 (542 aa).

Residues 30–33 (TLGP), K51, 87–91 (DGTTT), G415, and D496 each bind ATP.

This sequence belongs to the chaperonin (HSP60) family. As to quaternary structure, forms a cylinder of 14 subunits composed of two heptameric rings stacked back-to-back. Interacts with the co-chaperonin GroES.

It is found in the cytoplasm. The catalysed reaction is ATP + H2O + a folded polypeptide = ADP + phosphate + an unfolded polypeptide.. Its function is as follows. Together with its co-chaperonin GroES, plays an essential role in assisting protein folding. The GroEL-GroES system forms a nano-cage that allows encapsulation of the non-native substrate proteins and provides a physical environment optimized to promote and accelerate protein folding. This is Chaperonin GroEL 2 from Mesorhizobium japonicum (strain LMG 29417 / CECT 9101 / MAFF 303099) (Mesorhizobium loti (strain MAFF 303099)).